Here is a 552-residue protein sequence, read N- to C-terminus: Urocanate hydratase (552 aa).

NAD(+)-binding positions include 49-50 (GG), glutamine 127, 173-175 (GMG), aspartate 193, 239-240 (NA), 260-264 (QTSAH), 270-271 (YI), and tyrosine 319. The active site involves cysteine 407. An NAD(+)-binding site is contributed by glycine 489.

The protein belongs to the urocanase family. The cofactor is NAD(+).

The protein resides in the cytoplasm. The enzyme catalyses 4-imidazolone-5-propanoate = trans-urocanate + H2O. The protein operates within amino-acid degradation; L-histidine degradation into L-glutamate; N-formimidoyl-L-glutamate from L-histidine: step 2/3. In terms of biological role, catalyzes the conversion of urocanate to 4-imidazolone-5-propionate. The chain is Urocanate hydratase from Bacillus cereus (strain AH820).